We begin with the raw amino-acid sequence, 270 residues long: Acetylglutamate kinase (270 aa).

Substrate contacts are provided by residues 41-42 (GG), R63, and N166.

The protein belongs to the acetylglutamate kinase family. ArgB subfamily.

It localises to the cytoplasm. It catalyses the reaction N-acetyl-L-glutamate + ATP = N-acetyl-L-glutamyl 5-phosphate + ADP. It functions in the pathway amino-acid biosynthesis; L-arginine biosynthesis; N(2)-acetyl-L-ornithine from L-glutamate: step 2/4. Catalyzes the ATP-dependent phosphorylation of N-acetyl-L-glutamate. In Anaeromyxobacter dehalogenans (strain 2CP-C), this protein is Acetylglutamate kinase.